We begin with the raw amino-acid sequence, 177 residues long: Probable adenylyl-sulfate kinase (177 aa).

ATP is bound at residue 12 to 19; the sequence is GLSGAGKT. The active-site Phosphoserine intermediate is the serine 86.

The protein belongs to the APS kinase family.

The enzyme catalyses adenosine 5'-phosphosulfate + ATP = 3'-phosphoadenylyl sulfate + ADP + H(+). Its pathway is sulfur metabolism; hydrogen sulfide biosynthesis; sulfite from sulfate: step 2/3. Functionally, catalyzes the synthesis of activated sulfate. In Synechocystis sp. (strain ATCC 27184 / PCC 6803 / Kazusa), this protein is Probable adenylyl-sulfate kinase (cysC).